The sequence spans 362 residues: Aminomethyltransferase (362 aa).

This sequence belongs to the GcvT family. The glycine cleavage system is composed of four proteins: P, T, L and H.

It catalyses the reaction N(6)-[(R)-S(8)-aminomethyldihydrolipoyl]-L-lysyl-[protein] + (6S)-5,6,7,8-tetrahydrofolate = N(6)-[(R)-dihydrolipoyl]-L-lysyl-[protein] + (6R)-5,10-methylene-5,6,7,8-tetrahydrofolate + NH4(+). Its function is as follows. The glycine cleavage system catalyzes the degradation of glycine. In Colwellia psychrerythraea (strain 34H / ATCC BAA-681) (Vibrio psychroerythus), this protein is Aminomethyltransferase.